Consider the following 179-residue polypeptide: Large ribosomal subunit protein uL5 (179 aa).

The protein belongs to the universal ribosomal protein uL5 family. As to quaternary structure, part of the 50S ribosomal subunit; part of the 5S rRNA/L5/L18/L25 subcomplex. Contacts the 5S rRNA and the P site tRNA. Forms a bridge to the 30S subunit in the 70S ribosome.

In terms of biological role, this is one of the proteins that bind and probably mediate the attachment of the 5S RNA into the large ribosomal subunit, where it forms part of the central protuberance. In the 70S ribosome it contacts protein S13 of the 30S subunit (bridge B1b), connecting the 2 subunits; this bridge is implicated in subunit movement. Contacts the P site tRNA; the 5S rRNA and some of its associated proteins might help stabilize positioning of ribosome-bound tRNAs. In Shewanella amazonensis (strain ATCC BAA-1098 / SB2B), this protein is Large ribosomal subunit protein uL5.